The primary structure comprises 841 residues: MEQGVIERARELRRRIENADHRYYDLADPEITDAQYDQLFRELQELEQKYPELVTADSPSMRVGGAVRKSFVKVRHSIPMLSLANAFDEVEVKNFVDRIFRRMGSSNPLEFSVEPKFDGLAISLRYELGKFVQGVTRGDGDVGEDVSENIRTIRSVPLKLKGNNVPAILEVRGEVYMPRDGFSEFNKRAMARGEKLLANPRNGAAGSLRQLDSRISAQRPLSFFAYGVGLIQVEQDLFEEIPQSIASTHSAMLAQLRAWGFPVSSLVEVVQGSDGLLAYYQRIGEARDGLPFDIDGVVYKLDDLAGQREMGFVSRAPRWALAHKFPAQEQSTTVEAIEIQIGRTGAATPVARLKPVHVAGVIVTNATLHNADQIARLDVRVGDTVIVRRAGDVIPEVAAVVADQRPPATQSWQMPTQCPVCGSEIVREEGQAVWRCSGELTCPAQRKEAFRHFVSRRAMDVDGLGEKFIEVLVDSGVVQGVADLYLLTVDQLLQLRMISTAESPHAFLREAREHLASGAYAQLEATLVGIGVDLAGEREVPQTWQADLLRAGLPTFDWNRKKIATKWAENLIEAIETSRDTTLERFLFALGIEHVGESTAKALSAWFGDLDLIRHLPWPLFKRVPDIGGEVARSLGHFFDQPGNQKAIDHLLARKVRIGDTHPPSPKLRGELRLANLLEDLEIPKVTPIRAAQIATAFGSIDALRNGGPEPLVEAGVPQSVAESLATWLLVPANDTLAVKAQKKLSALLAMMPEAGEEKTGPLDGQTVVITGTLAALTRDAAKQRLEALGAKVAGSVSKKTAFLVAGEEAGSKLDKAQSLGVEIWDEARLLAFLGEHGQQR.

NAD(+) contacts are provided by residues D33–D37, S82–L83, and E114. K116 (N6-AMP-lysine intermediate) is an active-site residue. Positions 137, 174, 300, and 324 each coordinate NAD(+). Zn(2+) is bound by residues C418, C421, C436, and C442. The BRCT domain maps to E758 to R841.

The protein belongs to the NAD-dependent DNA ligase family. LigA subfamily. Requires Mg(2+) as cofactor. The cofactor is Mn(2+).

It catalyses the reaction NAD(+) + (deoxyribonucleotide)n-3'-hydroxyl + 5'-phospho-(deoxyribonucleotide)m = (deoxyribonucleotide)n+m + AMP + beta-nicotinamide D-nucleotide.. In terms of biological role, DNA ligase that catalyzes the formation of phosphodiester linkages between 5'-phosphoryl and 3'-hydroxyl groups in double-stranded DNA using NAD as a coenzyme and as the energy source for the reaction. It is essential for DNA replication and repair of damaged DNA. This Xanthomonas oryzae pv. oryzae (strain KACC10331 / KXO85) protein is DNA ligase.